The primary structure comprises 3088 residues: Protein prune homolog 2 (3088 aa).

The residue at position 1 (methionine 1) is an N-acetylmethionine. The DHH motif signature appears at 109-111 (GSS). Disordered regions lie at residues 433–468 (IRSS…GLDS), 490–628 (HFDL…EPAS), 673–759 (SSEQ…QGTN), 771–795 (SGRS…AAVA), 846–909 (SELL…PKTR), 952–1080 (SNLG…SSYD), 1192–1211 (SDEH…NEKS), 1231–1371 (SFML…LVAS), 1413–1452 (RDVQ…GMNF), 1472–1491 (LEPE…SLDF), 1515–1585 (VKGS…QESE), 1632–1698 (DSFS…EESI), 1741–1768 (LDSS…DPWT), 1782–1813 (VEKE…KNED), 2089–2114 (ILTH…SEAK), 2173–2215 (YQAD…PDMA), 2240–2260 (QEPT…PESQ), 2492–2542 (SDLP…KNED), 2589–2667 (TQLA…SELG), 2687–2710 (ALEE…AGPD), 2814–2833 (QSEG…EIDI), and 2841–2875 (PDEA…AEEE). The segment covering 503 to 512 (SGQSQQSSHS) has biased composition (low complexity). The segment covering 562–582 (SLVEHDEEFVQRQDSPRDNSE) has biased composition (basic and acidic residues). Composition is skewed to polar residues over residues 613–625 (MNSL…STEE) and 673–684 (SSEQESVFQSPE). Over residues 685–699 (SWKEHKPSSIDRRAS) the composition is skewed to basic and acidic residues. Residues 750–759 (LPNTSPQGTN) are compositionally biased toward polar residues. Residues 846–857 (SELLDNSPSEIN) are compositionally biased toward polar residues. The span at 865–876 (WGKKNNDSRDHI) shows a compositional bias: basic and acidic residues. Polar residues predominate over residues 881-894 (NPSSDLDHTWTNSK). Residues 895-909 (PPKEDQNGLVDPKTR) are compositionally biased toward basic and acidic residues. Over residues 964–977 (DTNYSTSDSYTSPT) the composition is skewed to low complexity. Basic and acidic residues predominate over residues 980–1000 (GDEKETEHKPFAKEEGFESKD). Composition is skewed to polar residues over residues 1001–1027 (GNST…SSGP) and 1037–1048 (HTDNSSEINTTH). Composition is skewed to basic and acidic residues over residues 1049–1062 (NLDE…HTDG), 1192–1208 (SDEH…HTLN), 1282–1293 (HLDKQDTERETL), 1314–1339 (DPWK…RGHL), and 1425–1434 (QPKDTHEKHL). Residues 1436-1450 (SQRNSGETTETSDGM) are compositionally biased toward polar residues. Over residues 1537–1585 (SSEYTHSSASSPELNDSSVALSSWGQQPSSGYQEENQGNWSEQNHQESE) the composition is skewed to polar residues. Acidic residues predominate over residues 1687–1698 (SDDDSVGGEESI). The span at 1752–1768 (KSNPFCDNQQSSPDPWT) shows a compositional bias: polar residues. Composition is skewed to basic and acidic residues over residues 2516–2542 (EKTI…KNED) and 2604–2622 (NERK…DTRS). Polar residues predominate over residues 2623 to 2632 (SFESPAQDQS). Residues 2823–2833 (DNLDSPDEIDI) show a composition bias toward acidic residues. The CRAL-TRIO domain occupies 2895–3056 (DMKVIEPYRR…SIIKLDEELR (162 aa)).

This sequence belongs to the PPase class C family. Prune subfamily. A high level of expression seen in the nervous system (brain, cerebellum and spinal cord) as well as adrenal gland. Expressed at high levels in noneuroblastoma, rhabdomyosarcoma, melanoma and some osteosarcoma cell lines, whereas at only low levels in cancer cell lines of liver, breast, thyroid and colon. Expression is significantly higher in favorable tumors than aggressive ones.

It localises to the cytoplasm. In terms of biological role, may play an important role in regulating differentiation, survival and aggressiveness of the tumor cells. This Homo sapiens (Human) protein is Protein prune homolog 2 (PRUNE2).